The following is a 129-amino-acid chain: Small ribosomal subunit protein uS12 (129 aa).

Residues 1–25 are disordered; that stretch reads MPTYNQLVRFGRKSKTRKTKSPALE. Basic residues predominate over residues 10 to 20; sequence FGRKSKTRKTK. Position 89 is a 3-methylthioaspartic acid (Asp89). The tract at residues 110–129 is disordered; sequence RKQGRSRYGAPSKQVAVTKK.

This sequence belongs to the universal ribosomal protein uS12 family. As to quaternary structure, part of the 30S ribosomal subunit. Contacts proteins S8 and S17. May interact with IF1 in the 30S initiation complex.

Functionally, with S4 and S5 plays an important role in translational accuracy. Interacts with and stabilizes bases of the 16S rRNA that are involved in tRNA selection in the A site and with the mRNA backbone. Located at the interface of the 30S and 50S subunits, it traverses the body of the 30S subunit contacting proteins on the other side and probably holding the rRNA structure together. The combined cluster of proteins S8, S12 and S17 appears to hold together the shoulder and platform of the 30S subunit. In Rickettsia canadensis (strain McKiel), this protein is Small ribosomal subunit protein uS12.